The sequence spans 319 residues: Putrescine hydroxycinnamoyltransferase 2 (319 aa).

Residues histidine 160 and aspartate 301 each act as proton acceptor in the active site.

Belongs to the plant acyltransferase family.

Its function is as follows. Hydroxycinnamoyl transferase that catalyzes the transfer of an acyl from p-coumaryol-CoA to putrescine, to produce coumaroyl putrescine. In Oryza sativa subsp. japonica (Rice), this protein is Putrescine hydroxycinnamoyltransferase 2.